Here is a 173-residue protein sequence, read N- to C-terminus: uncharacterized protein (173 aa).

One can recognise an MSP domain in the interval 16–133 (DLVLRPETIT…KHVLIRFPNK (118 aa)). A compositionally biased stretch (basic and acidic residues) spans 141–163 (KKMEEDDMKQQKERNKLSNEKMG). Residues 141 to 173 (KKMEEDDMKQQKERNKLSNEKMGIRNQNMGEKK) form a disordered region.

This is an uncharacterized protein from Caenorhabditis elegans.